Consider the following 438-residue polypeptide: Aspartic proteinase nepenthesin-2 (438 aa).

An N-terminal signal peptide occupies residues 1–24 (MASPLYSVVLGLAIVSAIVAPTSS). The propeptide at 25–79 (TSRGTLLHHGQKRPQPGLRVDLEQVDSGKNLTKYELIKRAIKRGERRMRSINAML) is activation peptide. The N-linked (GlcNAc...) asparagine glycan is linked to N54. Residues 96–431 (YLMNVAIGTP…DLQNLAVSFV (336 aa)) enclose the Peptidase A1 domain. Residue D114 is part of the active site. Cystine bridges form between C124/C127, C130/C204, C151/C169, C156/C164, C241/C435, and C354/C395. The active site involves D315.

Belongs to the peptidase A1 family.

The protein resides in the secreted. It catalyses the reaction Similar to pepsin, but also cleaves on either side of Asp and at Lys-|-Arg.. With respect to regulation, inhibited by pepstatin and by diazoacetyl-D,L-norleucine methyl ester (DAN) in the presence of Cu(2+) ions. Functionally, extracellular proteinase found in the pitcher fluid of carnivorous plants. Digest prey for nitrogen uptake. The chain is Aspartic proteinase nepenthesin-2 (nep2) from Nepenthes gracilis (Slender pitcher plant).